A 366-amino-acid chain; its full sequence is Chorismate synthase (366 aa).

Arg-48 is an NADP(+) binding site. Residues 125-127, 241-242, Gly-285, 300-304, and Arg-326 each bind FMN; these read RSS, NA, and KPTSS.

The protein belongs to the chorismate synthase family. In terms of assembly, homotetramer. FMNH2 is required as a cofactor.

The enzyme catalyses 5-O-(1-carboxyvinyl)-3-phosphoshikimate = chorismate + phosphate. Its pathway is metabolic intermediate biosynthesis; chorismate biosynthesis; chorismate from D-erythrose 4-phosphate and phosphoenolpyruvate: step 7/7. Functionally, catalyzes the anti-1,4-elimination of the C-3 phosphate and the C-6 proR hydrogen from 5-enolpyruvylshikimate-3-phosphate (EPSP) to yield chorismate, which is the branch point compound that serves as the starting substrate for the three terminal pathways of aromatic amino acid biosynthesis. This reaction introduces a second double bond into the aromatic ring system. In Ruegeria pomeroyi (strain ATCC 700808 / DSM 15171 / DSS-3) (Silicibacter pomeroyi), this protein is Chorismate synthase.